A 596-amino-acid chain; its full sequence is Aspartate--tRNA(Asp/Asn) ligase (596 aa).

Glu-182 provides a ligand contact to L-aspartate. Residues 206 to 209 are aspartate; it reads QLFK. Arg-228 is an L-aspartate binding site. Residues 228–230 and Gln-237 each bind ATP; that span reads RDE. L-aspartate is bound at residue His-456. Glu-490 is a binding site for ATP. Arg-497 lines the L-aspartate pocket. 542-545 provides a ligand contact to ATP; that stretch reads GLDR.

This sequence belongs to the class-II aminoacyl-tRNA synthetase family. Type 1 subfamily. In terms of assembly, homodimer.

The protein localises to the cytoplasm. The enzyme catalyses tRNA(Asx) + L-aspartate + ATP = L-aspartyl-tRNA(Asx) + AMP + diphosphate. Its function is as follows. Aspartyl-tRNA synthetase with relaxed tRNA specificity since it is able to aspartylate not only its cognate tRNA(Asp) but also tRNA(Asn). Reaction proceeds in two steps: L-aspartate is first activated by ATP to form Asp-AMP and then transferred to the acceptor end of tRNA(Asp/Asn). This Syntrophotalea carbinolica (strain DSM 2380 / NBRC 103641 / GraBd1) (Pelobacter carbinolicus) protein is Aspartate--tRNA(Asp/Asn) ligase.